Consider the following 421-residue polypeptide: UDP-N-acetylglucosamine 1-carboxyvinyltransferase (421 aa).

23-24 lines the phosphoenolpyruvate pocket; it reads KN. UDP-N-acetyl-alpha-D-glucosamine is bound at residue Arg-92. Cys-116 acts as the Proton donor in catalysis. Cys-116 carries the post-translational modification 2-(S-cysteinyl)pyruvic acid O-phosphothioketal. Residues 121-125, 161-164, Asp-306, and Ile-328 contribute to the UDP-N-acetyl-alpha-D-glucosamine site; these read RPVDL and KVSV.

It belongs to the EPSP synthase family. MurA subfamily.

The protein localises to the cytoplasm. The catalysed reaction is phosphoenolpyruvate + UDP-N-acetyl-alpha-D-glucosamine = UDP-N-acetyl-3-O-(1-carboxyvinyl)-alpha-D-glucosamine + phosphate. It participates in cell wall biogenesis; peptidoglycan biosynthesis. Cell wall formation. Adds enolpyruvyl to UDP-N-acetylglucosamine. The polypeptide is UDP-N-acetylglucosamine 1-carboxyvinyltransferase (Vibrio vulnificus (strain CMCP6)).